A 90-amino-acid chain; its full sequence is Small ribosomal subunit protein uS17 (90 aa).

The protein belongs to the universal ribosomal protein uS17 family. Part of the 30S ribosomal subunit.

Functionally, one of the primary rRNA binding proteins, it binds specifically to the 5'-end of 16S ribosomal RNA. The sequence is that of Small ribosomal subunit protein uS17 from Acidiphilium cryptum (strain JF-5).